We begin with the raw amino-acid sequence, 246 residues long: Dehydration-responsive element-binding protein 1H (246 aa).

The segment at 1–43 (MDMAGHEVNSSSSSSGAESSSSSSGRQQYKKRPAGRTKFRETR) is disordered. Over residues 10-24 (SSSSSSGAESSSSSS) the composition is skewed to low complexity. Basic residues predominate over residues 28 to 37 (QYKKRPAGRT). A DNA-binding region (AP2/ERF) is located at residues 46-110 (VYRGVRRRGG…GGGAACLNFQ (65 aa)). The interval 155–187 (AMDEATSGVSAPPPLANNAGSSETPGPSSIDGT) is disordered. Residues 172–181 (NAGSSETPGP) are compositionally biased toward polar residues.

This sequence belongs to the AP2/ERF transcription factor family. ERF subfamily.

It is found in the nucleus. In terms of biological role, transcriptional activator that binds specifically to the DNA sequence 5'-[AG]CCGAC-3'. Binding to the C-repeat/DRE element mediates high salinity- and dehydration-inducible transcription. In Oryza sativa subsp. indica (Rice), this protein is Dehydration-responsive element-binding protein 1H (DREB1H).